Consider the following 488-residue polypeptide: Cardiolipin synthase 2 (488 aa).

2 helical membrane-spanning segments follow: residues 8–28 and 39–59; these read IIINILLVSAFLLNLVFAFII and IWAWLLVLVFLPLVGFILYLL. PLD phosphodiesterase domains are found at residues 223-250 and 401-428; these read MNNRNHRKIVVIDGTIGYVGGFNVGDEY and DNGFLHSKTLVIDDEVASVGTANMDNRS. Catalysis depends on residues histidine 228, lysine 230, aspartate 235, histidine 406, lysine 408, and aspartate 413.

Belongs to the phospholipase D family. Cardiolipin synthase subfamily.

The protein resides in the cell membrane. The enzyme catalyses 2 a 1,2-diacyl-sn-glycero-3-phospho-(1'-sn-glycerol) = a cardiolipin + glycerol. Functionally, catalyzes the reversible phosphatidyl group transfer from one phosphatidylglycerol molecule to another to form cardiolipin (CL) (diphosphatidylglycerol) and glycerol. The chain is Cardiolipin synthase 2 (cls2) from Staphylococcus epidermidis (strain ATCC 35984 / DSM 28319 / BCRC 17069 / CCUG 31568 / BM 3577 / RP62A).